The sequence spans 255 residues: 4-hydroxy-tetrahydrodipicolinate reductase (255 aa).

NAD(+)-binding positions include 8–13 (GSTGRM), 88–90 (ATT), and 112–115 (SSNM). Catalysis depends on His-144, which acts as the Proton donor/acceptor. His-145 provides a ligand contact to (S)-2,3,4,5-tetrahydrodipicolinate. Catalysis depends on Lys-148, which acts as the Proton donor. 154-155 (GT) is a binding site for (S)-2,3,4,5-tetrahydrodipicolinate.

Belongs to the DapB family.

The protein localises to the cytoplasm. The catalysed reaction is (S)-2,3,4,5-tetrahydrodipicolinate + NAD(+) + H2O = (2S,4S)-4-hydroxy-2,3,4,5-tetrahydrodipicolinate + NADH + H(+). It catalyses the reaction (S)-2,3,4,5-tetrahydrodipicolinate + NADP(+) + H2O = (2S,4S)-4-hydroxy-2,3,4,5-tetrahydrodipicolinate + NADPH + H(+). Its pathway is amino-acid biosynthesis; L-lysine biosynthesis via DAP pathway; (S)-tetrahydrodipicolinate from L-aspartate: step 4/4. In terms of biological role, catalyzes the conversion of 4-hydroxy-tetrahydrodipicolinate (HTPA) to tetrahydrodipicolinate. This Sulfurovum sp. (strain NBC37-1) protein is 4-hydroxy-tetrahydrodipicolinate reductase.